Consider the following 392-residue polypeptide: Nucleosome assembly protein 1-like 1-A (392 aa).

The tract at residues 1-37 (MANIDNKGQTELDQQDMEDVEDVEEEETGEDANSKAR) is disordered. The span at 13-30 (DQQDMEDVEDVEEEETGE) shows a compositional bias: acidic residues. Positions 126–150 (YEPTEEECEWKVEEEDISGDLKEKA) match the NAP1L motif motif. Positions 273 to 279 (IKKKQKH) match the Nuclear localization signal motif. Residues 346-377 (AIEDDDDDYDEEGEEADDEEGEEEADEDNDPD) are compositionally biased toward acidic residues. A disordered region spans residues 346-392 (AIEDDDDDYDEEGEEADDEEGEEEADEDNDPDYEPKKGQNPAECKQQ).

Belongs to the nucleosome assembly protein (NAP) family. In terms of assembly, forms homomultimers. Interacts with histone B4. Interacts with the B-type cyclins ccnb1 and ccnb2. Post-translationally, phosphorylated by cyclin B-cdc2 kinase complexes. Initially expressed throughout the embryo with expression higher at the animal pole. Becomes localized to presumptive ectoderm by gastrula stages. By stage 18 (neurula), expressed in the neural plate and posterior to the cement gland. In late neurula/early tailbud stages, expressed in the neural crest, neural tube, eyes, tailbud and ventral blood islands. Adult expression is predominantly in ovaries.

It localises to the cytoplasm. Its subcellular location is the nucleus. Its function is as follows. Acts as a chaperone for the linker histone to facilitate deposition of histone B4 onto linker DNA. Required for both remodeling of sperm chromatin into nucleosomes, and linker histone binding to nucleosome core dimers. Plays a role in tissue-specific gene regulation. Required for primitive hemopoiesis, acting upstream of tal1/scl. This is Nucleosome assembly protein 1-like 1-A (nap1l1-a) from Xenopus laevis (African clawed frog).